Consider the following 204-residue polypeptide: Urease accessory protein UreE (204 aa).

Positions 172 to 190 (HGHAHSHDHDHDHDHDHQH) are enriched in basic and acidic residues. Residues 172 to 204 (HGHAHSHDHDHDHDHDHQHGPGCTHGHHGHDHH) are disordered.

Belongs to the UreE family.

The protein localises to the cytoplasm. In terms of biological role, involved in urease metallocenter assembly. Binds nickel. Probably functions as a nickel donor during metallocenter assembly. The polypeptide is Urease accessory protein UreE (Burkholderia orbicola (strain AU 1054)).